The chain runs to 91 residues: Small ribosomal subunit protein uS19 (91 aa).

It belongs to the universal ribosomal protein uS19 family.

Its function is as follows. Protein S19 forms a complex with S13 that binds strongly to the 16S ribosomal RNA. This Verminephrobacter eiseniae (strain EF01-2) protein is Small ribosomal subunit protein uS19.